The chain runs to 41 residues: Disintegrin viperistatin (41 aa).

Disulfide bonds link cysteine 1–cysteine 10, cysteine 6–cysteine 29, cysteine 7–cysteine 34, and cysteine 19–cysteine 36. Residues 1–41 form the Disintegrin domain; the sequence is CTTGPCCRQCKLKPAGTTCWKTSRTSHYCTGKSCDCPVYQG. Positions 21-23 match the Cell attachment site; atypical (KTS) motif; it reads KTS.

In terms of assembly, monomer. As to expression, expressed by the venom gland.

It localises to the secreted. Functionally, potent and highly selective inhibitor of alpha-1/beta-1 (ITGA1/ITGB1) integrin binding to collagen I and IV. Is about 25-fold more potent than obtustatin inhibiting the binding of this integrin to collagen IV. The sequence is that of Disintegrin viperistatin from Daboia palaestinae (Palestine viper).